A 50-amino-acid chain; its full sequence is Protein hunchback (50 aa).

3 C2H2-type zinc fingers span residues 1-5, 11-33, and 39-50; these read HIRNH, FKCNKCSYSCVNKSMLNSHLKSH, and YRCADCAYATKY.

This sequence belongs to the hunchback C2H2-type zinc-finger protein family.

The protein resides in the nucleus. Its function is as follows. Gap class segmentation protein that controls development of head structures. This is Protein hunchback (hb) from Schultesia lampyridiformis (Firefly mimic roach).